A 150-amino-acid chain; its full sequence is Aspartate carbamoyltransferase regulatory chain (150 aa).

Residues cysteine 105, cysteine 110, cysteine 133, and cysteine 136 each contribute to the Zn(2+) site.

It belongs to the PyrI family. As to quaternary structure, contains catalytic and regulatory chains. Zn(2+) is required as a cofactor.

Involved in allosteric regulation of aspartate carbamoyltransferase. The sequence is that of Aspartate carbamoyltransferase regulatory chain from Thermococcus sibiricus (strain DSM 12597 / MM 739).